The following is a 343-amino-acid chain: Aspartate-semialdehyde dehydrogenase (343 aa).

NADP(+) is bound by residues 20-23 and 48-49; these read SGAV and RS. Arg108 is a phosphate binding site. The active-site Acyl-thioester intermediate is Cys137. Gln164 contacts substrate. 167-168 contacts NADP(+); it reads SG. Position 221 (Lys221) interacts with phosphate. Arg243 contacts substrate. The Proton acceptor role is filled by His250. Residue Gln323 coordinates NADP(+).

This sequence belongs to the aspartate-semialdehyde dehydrogenase family. In terms of assembly, homodimer.

The catalysed reaction is L-aspartate 4-semialdehyde + phosphate + NADP(+) = 4-phospho-L-aspartate + NADPH + H(+). It functions in the pathway amino-acid biosynthesis; L-lysine biosynthesis via DAP pathway; (S)-tetrahydrodipicolinate from L-aspartate: step 2/4. The protein operates within amino-acid biosynthesis; L-methionine biosynthesis via de novo pathway; L-homoserine from L-aspartate: step 2/3. Its pathway is amino-acid biosynthesis; L-threonine biosynthesis; L-threonine from L-aspartate: step 2/5. Functionally, catalyzes the NADPH-dependent formation of L-aspartate-semialdehyde (L-ASA) by the reductive dephosphorylation of L-aspartyl-4-phosphate. The chain is Aspartate-semialdehyde dehydrogenase from Prochlorococcus marinus (strain SARG / CCMP1375 / SS120).